A 242-amino-acid polypeptide reads, in one-letter code: Ubiquinone biosynthesis O-methyltransferase (242 aa).

Residues Arg44, Gly64, Asp85, and Met129 each coordinate S-adenosyl-L-methionine.

The protein belongs to the methyltransferase superfamily. UbiG/COQ3 family.

The catalysed reaction is a 3-demethylubiquinol + S-adenosyl-L-methionine = a ubiquinol + S-adenosyl-L-homocysteine + H(+). The enzyme catalyses a 3-(all-trans-polyprenyl)benzene-1,2-diol + S-adenosyl-L-methionine = a 2-methoxy-6-(all-trans-polyprenyl)phenol + S-adenosyl-L-homocysteine + H(+). Its pathway is cofactor biosynthesis; ubiquinone biosynthesis. O-methyltransferase that catalyzes the 2 O-methylation steps in the ubiquinone biosynthetic pathway. This is Ubiquinone biosynthesis O-methyltransferase from Klebsiella pneumoniae subsp. pneumoniae (strain ATCC 700721 / MGH 78578).